Here is a 125-residue protein sequence, read N- to C-terminus: uncharacterized protein (125 aa).

Residues 1-21 form the signal peptide; the sequence is MIRNIIITISAILLLTSKGFA. Residues 54–102 are a coiled coil; the sequence is KPEIREEIQKYRVEIVNINKKKRELYDKLSKEAQNFLAKEQEYKQRLSS. A disordered region spans residues 96–125; sequence YKQRLSSSSMATEDSKDNNTAKDNKDADKK. The segment covering 108–125 has biased composition (basic and acidic residues); that stretch reads EDSKDNNTAKDNKDADKK.

This is an uncharacterized protein from Rickettsia bellii (strain RML369-C).